The sequence spans 899 residues: Inositol 1,4,5-triphosphate receptor associated 1 (899 aa).

Disordered stretches follow at residues 32-110 (PGTH…HRHL), 164-286 (RRGR…PLQH), 324-391 (KTAR…EEPG), and 463-486 (AAEQ…SKSG). Positions 100 to 110 (SPHRRLSHRHL) are enriched in basic residues. Serine 106 is subject to Phosphoserine. The tract at residues 140–172 (SEEDKKKNLALLEEAKLVSERFLTRRGRKSRSS) is interaction with PRKG1. The segment covering 171–180 (SSLGDSPSAV) has biased composition (polar residues). Positions 181 to 203 (SPNLSSGASPASSRSCSLTISTS) are enriched in low complexity. Basic and acidic residues predominate over residues 266–281 (TVEKTKELTVEQKENF). Residues 333–351 (PRTTAQGSGGTVSPHSLGQ) show a composition bias toward polar residues. Position 382 is a phosphoserine (serine 382). The segment at 521–567 (NVFVQLSLAFRNDSYTLESRINQAERERNLTEENTEKELENFKASIT) is interaction with ITPR1. Positions 534-632 (SYTLESRINQ…MQYVENLKRT (99 aa)) form a coiled coil. Serine 670 and serine 683 each carry phosphoserine. Disordered regions lie at residues 695–722 (LPGQ…SSIS) and 757–818 (TSQE…DQGS). Low complexity predominate over residues 699–715 (APSSSPMPSLPALSESS). Basic and acidic residues-rich tracts occupy residues 759-770 (QETKAKAEEEAY) and 777-787 (GVKKTEELQDL). The span at 788–814 (KEEEEEEQKTESPEEPEEVEETQEDEK) shows a compositional bias: acidic residues. A helical transmembrane segment spans residues 839 to 859 (WQVIWMMAAVMLVLSVVLGLY). The segment at 867–899 (EEADGPPGRSTCSAAQRDSWWSSGLQQELPAEQ) is disordered. Residues 876–892 (STCSAAQRDSWWSSGLQ) are compositionally biased toward polar residues.

As to quaternary structure, part of cGMP kinase signaling complex at least composed of ACTA2/alpha-actin, CNN1/calponin H1, PLN/phospholamban, PRKG1 and ITPR1. Interacts with PRKG1/cGKI-beta and ITPR1/IP3R type I. Interacts with HCN4; regulates HCN4 channel activity. In terms of processing, phosphorylated by PRKG1/cGKI. As to expression, highly expressed in smooth muscle such as aorta, colon and uterus. Detected in the brain, in the thalamus, in the hippocampus and myenteric plexus. Highly expressed in megakaryocytes. Down-regulated during macrophage differentiation.

It localises to the membrane. It is found in the cytoplasm. Its subcellular location is the perinuclear region. The protein resides in the sarcoplasmic reticulum. Functionally, plays a role as NO/PRKG1-dependent regulator of IP3-induced calcium release; its phosphorylation by PRKG1 inhibits bradykinin and IP3-induced calcium release from intracellular stores. Recruits PRKG1 to the endoplasmic reticulum and may mediate the assembly of PRKG1 and ITPR1 in a macrocomplex. Involved in PRKG1 signaling cascade leading to inhibition of platelet activation and aggregation. Also mediates NO-dependent inhibition of calcium signaling in gastrointestinal smooth muscle contributing to NO-dependent relaxation. Plays a role in the regulation of cellular excitability by regulating the hyperpolarization-activated cyclic nucleotide-gated HCN4 channel activity. In Mus musculus (Mouse), this protein is Inositol 1,4,5-triphosphate receptor associated 1 (Irag1).